Reading from the N-terminus, the 638-residue chain is Chaperone protein HtpG (638 aa).

An a; substrate-binding region spans residues 1–346 (MSQQETHGFQ…SNDLPLNVSR (346 aa)). Positions 347–563 (EILQDNKVTT…EGEMSTQMIK (217 aa)) are b. The interval 564 to 638 (LMQAAGQDVP…MNQMLLASVK (75 aa)) is c.

It belongs to the heat shock protein 90 family. Homodimer.

Its subcellular location is the cytoplasm. Molecular chaperone. Has ATPase activity. The chain is Chaperone protein HtpG from Shewanella pealeana (strain ATCC 700345 / ANG-SQ1).